The chain runs to 396 residues: Probable sugar efflux transporter (396 aa).

The next 12 membrane-spanning stretches (helical) occupy residues 15–35, 50–70, 81–101, 103–123, 136–156, 170–190, 209–229, 246–266, 275–295, 299–319, 333–353, and 364–384; these read VVTL…PVGL, VGIM…PFML, LICL…SWSF, VLVI…SITA, AQAL…GLPL, FFAI…LLPL, PALM…YTAY, FATA…VIFG, ALVS…LPAA, IHLG…GLGM, VAMA…ALVG, and MIGY…IIIF.

The protein belongs to the major facilitator superfamily. SotB (TC 2.A.1.2) family.

It is found in the cell inner membrane. In terms of biological role, involved in the efflux of sugars. The physiological role may be the reduction of the intracellular concentration of toxic sugars or sugar metabolites. The polypeptide is Probable sugar efflux transporter (Escherichia coli O157:H7 (strain EC4115 / EHEC)).